We begin with the raw amino-acid sequence, 242 residues long: UPF0246 protein SPN23F15130 (242 aa).

Belongs to the UPF0246 family.

This is UPF0246 protein SPN23F15130 from Streptococcus pneumoniae (strain ATCC 700669 / Spain 23F-1).